A 169-amino-acid chain; its full sequence is Putative tRNA (cytidine(34)-2'-O)-methyltransferase (169 aa).

S-adenosyl-L-methionine is bound by residues isoleucine 79, glycine 104, isoleucine 125, and serine 133.

Belongs to the class IV-like SAM-binding methyltransferase superfamily. RNA methyltransferase TrmH family. TrmL subfamily.

The protein localises to the cytoplasm. It carries out the reaction cytidine(34) in tRNA + S-adenosyl-L-methionine = 2'-O-methylcytidine(34) in tRNA + S-adenosyl-L-homocysteine + H(+). It catalyses the reaction 5-carboxymethylaminomethyluridine(34) in tRNA(Leu) + S-adenosyl-L-methionine = 5-carboxymethylaminomethyl-2'-O-methyluridine(34) in tRNA(Leu) + S-adenosyl-L-homocysteine + H(+). Its function is as follows. Could methylate the ribose at the nucleotide 34 wobble position in tRNA. The sequence is that of Putative tRNA (cytidine(34)-2'-O)-methyltransferase from Listeria innocua serovar 6a (strain ATCC BAA-680 / CLIP 11262).